A 397-amino-acid chain; its full sequence is Elongation factor Tu (397 aa).

The tr-type G domain occupies 10–207; sequence KPHVNIGTIG…AVDESIPDPV (198 aa). The interval 19-26 is G1; that stretch reads GHVDHGKT. 19 to 26 is a binding site for GTP; sequence GHVDHGKT. A Mg(2+)-binding site is contributed by T26. The tract at residues 63-67 is G2; the sequence is GITIN. The interval 84–87 is G3; that stretch reads DAPG. GTP contacts are provided by residues 84 to 88 and 139 to 142; these read DAPGH and NKAD. The interval 139–142 is G4; that stretch reads NKAD. The G5 stretch occupies residues 177-179; sequence SGL.

Belongs to the TRAFAC class translation factor GTPase superfamily. Classic translation factor GTPase family. EF-Tu/EF-1A subfamily. In terms of assembly, monomer.

Its subcellular location is the cytoplasm. It catalyses the reaction GTP + H2O = GDP + phosphate + H(+). In terms of biological role, GTP hydrolase that promotes the GTP-dependent binding of aminoacyl-tRNA to the A-site of ribosomes during protein biosynthesis. The chain is Elongation factor Tu from Tropheryma whipplei (strain TW08/27) (Whipple's bacillus).